Reading from the N-terminus, the 244-residue chain is Aliphatic sulfonates import ATP-binding protein SsuB 2 (244 aa).

One can recognise an ABC transporter domain in the interval 13–229; the sequence is VQVRSLVRGF…ALGDSKFHEF (217 aa). 45 to 52 contributes to the ATP binding site; sequence GKSGSGKS.

This sequence belongs to the ABC transporter superfamily. Aliphatic sulfonates importer (TC 3.A.1.17.2) family. The complex is composed of two ATP-binding proteins (SsuB), two transmembrane proteins (SsuC) and a solute-binding protein (SsuA).

It is found in the cell membrane. The enzyme catalyses ATP + H2O + aliphatic sulfonate-[sulfonate-binding protein]Side 1 = ADP + phosphate + aliphatic sulfonateSide 2 + [sulfonate-binding protein]Side 1.. Functionally, part of the ABC transporter complex SsuABC involved in aliphatic sulfonates import. Responsible for energy coupling to the transport system. The sequence is that of Aliphatic sulfonates import ATP-binding protein SsuB 2 from Rhodococcus jostii (strain RHA1).